A 106-amino-acid chain; its full sequence is Large ribosomal subunit protein eL42 (106 aa).

Belongs to the eukaryotic ribosomal protein eL42 family.

The sequence is that of Large ribosomal subunit protein eL42 (RPL44) from Candida tropicalis (Yeast).